An 872-amino-acid chain; its full sequence is Alanine--tRNA ligase (872 aa).

Positions 566, 570, 668, and 672 each coordinate Zn(2+).

The protein belongs to the class-II aminoacyl-tRNA synthetase family. Zn(2+) serves as cofactor.

It localises to the cytoplasm. It carries out the reaction tRNA(Ala) + L-alanine + ATP = L-alanyl-tRNA(Ala) + AMP + diphosphate. In terms of biological role, catalyzes the attachment of alanine to tRNA(Ala) in a two-step reaction: alanine is first activated by ATP to form Ala-AMP and then transferred to the acceptor end of tRNA(Ala). Also edits incorrectly charged Ser-tRNA(Ala) and Gly-tRNA(Ala) via its editing domain. The chain is Alanine--tRNA ligase from Lactococcus lactis subsp. cremoris (strain SK11).